The following is a 436-amino-acid chain: Enolase (436 aa).

Residue Q163 participates in (2R)-2-phosphoglycerate binding. Residue E205 is the Proton donor of the active site. Mg(2+) is bound by residues D242, E285, and D312. (2R)-2-phosphoglycerate-binding residues include K337, R366, S367, and K388. K337 (proton acceptor) is an active-site residue.

It belongs to the enolase family. Requires Mg(2+) as cofactor.

It localises to the cytoplasm. The protein resides in the secreted. It is found in the cell surface. The catalysed reaction is (2R)-2-phosphoglycerate = phosphoenolpyruvate + H2O. It participates in carbohydrate degradation; glycolysis; pyruvate from D-glyceraldehyde 3-phosphate: step 4/5. Functionally, catalyzes the reversible conversion of 2-phosphoglycerate (2-PG) into phosphoenolpyruvate (PEP). It is essential for the degradation of carbohydrates via glycolysis. This Solidesulfovibrio magneticus (strain ATCC 700980 / DSM 13731 / RS-1) (Desulfovibrio magneticus) protein is Enolase.